Reading from the N-terminus, the 347-residue chain is Magnesium-protoporphyrin IX monomethyl ester [oxidative] cyclase (347 aa).

Belongs to the AcsF family. The cofactor is Fe cation.

It carries out the reaction Mg-protoporphyrin IX 13-monomethyl ester + 3 NADPH + 3 O2 + 2 H(+) = 3,8-divinyl protochlorophyllide a + 3 NADP(+) + 5 H2O. Its pathway is porphyrin-containing compound metabolism; chlorophyll biosynthesis (light-independent). Functionally, catalyzes the formation of the isocyclic ring in chlorophyll biosynthesis. Mediates the cyclase reaction, which results in the formation of divinylprotochlorophyllide (Pchlide) characteristic of all chlorophylls from magnesium-protoporphyrin IX 13-monomethyl ester (MgPMME). The chain is Magnesium-protoporphyrin IX monomethyl ester [oxidative] cyclase from Prochlorococcus marinus (strain SARG / CCMP1375 / SS120).